The sequence spans 206 residues: Small ribosomal subunit protein uS4 (206 aa).

An S4 RNA-binding domain is found at 96 to 161 (RRLDNVVYRM…QGRIQAALAL (66 aa)).

This sequence belongs to the universal ribosomal protein uS4 family. In terms of assembly, part of the 30S ribosomal subunit. Contacts protein S5. The interaction surface between S4 and S5 is involved in control of translational fidelity.

Its function is as follows. One of the primary rRNA binding proteins, it binds directly to 16S rRNA where it nucleates assembly of the body of the 30S subunit. Functionally, with S5 and S12 plays an important role in translational accuracy. This chain is Small ribosomal subunit protein uS4, found in Legionella pneumophila (strain Paris).